The primary structure comprises 1343 residues: DNA-directed RNA polymerase subunit beta (1343 aa).

It belongs to the RNA polymerase beta chain family. The RNAP catalytic core consists of 2 alpha, 1 beta, 1 beta' and 1 omega subunit. When a sigma factor is associated with the core the holoenzyme is formed, which can initiate transcription.

The catalysed reaction is RNA(n) + a ribonucleoside 5'-triphosphate = RNA(n+1) + diphosphate. In terms of biological role, DNA-dependent RNA polymerase catalyzes the transcription of DNA into RNA using the four ribonucleoside triphosphates as substrates. The chain is DNA-directed RNA polymerase subunit beta from Shewanella violacea.